Here is a 231-residue protein sequence, read N- to C-terminus: Phosphatidylserine decarboxylase proenzyme (231 aa).

Ser188 serves as the catalytic Schiff-base intermediate with substrate; via pyruvic acid. Ser188 is subject to Pyruvic acid (Ser); by autocatalysis.

The protein belongs to the phosphatidylserine decarboxylase family. PSD-A subfamily. In terms of assembly, heterodimer of a large membrane-associated beta subunit and a small pyruvoyl-containing alpha subunit. Requires pyruvate as cofactor. Is synthesized initially as an inactive proenzyme. Formation of the active enzyme involves a self-maturation process in which the active site pyruvoyl group is generated from an internal serine residue via an autocatalytic post-translational modification. Two non-identical subunits are generated from the proenzyme in this reaction, and the pyruvate is formed at the N-terminus of the alpha chain, which is derived from the carboxyl end of the proenzyme. The post-translation cleavage follows an unusual pathway, termed non-hydrolytic serinolysis, in which the side chain hydroxyl group of the serine supplies its oxygen atom to form the C-terminus of the beta chain, while the remainder of the serine residue undergoes an oxidative deamination to produce ammonia and the pyruvoyl prosthetic group on the alpha chain.

It is found in the cell membrane. It catalyses the reaction a 1,2-diacyl-sn-glycero-3-phospho-L-serine + H(+) = a 1,2-diacyl-sn-glycero-3-phosphoethanolamine + CO2. It functions in the pathway phospholipid metabolism; phosphatidylethanolamine biosynthesis; phosphatidylethanolamine from CDP-diacylglycerol: step 2/2. Catalyzes the formation of phosphatidylethanolamine (PtdEtn) from phosphatidylserine (PtdSer). This Rickettsia rickettsii (strain Iowa) protein is Phosphatidylserine decarboxylase proenzyme.